The primary structure comprises 249 residues: uncharacterized protein (249 aa).

Residues 1–20 (MSNQNKVLSLGLLLLAAVAA) form the signal peptide.

The protein belongs to the IIV-6 117L family.

This is an uncharacterized protein from Acheta domesticus (House cricket).